A 117-amino-acid chain; its full sequence is Large ribosomal subunit protein uL18 (117 aa).

It belongs to the universal ribosomal protein uL18 family. As to quaternary structure, part of the 50S ribosomal subunit; part of the 5S rRNA/L5/L18/L25 subcomplex. Contacts the 5S and 23S rRNAs.

In terms of biological role, this is one of the proteins that bind and probably mediate the attachment of the 5S RNA into the large ribosomal subunit, where it forms part of the central protuberance. This chain is Large ribosomal subunit protein uL18, found in Blochmanniella pennsylvanica (strain BPEN).